The sequence spans 157 residues: Endoribonuclease YbeY (157 aa).

His114, His118, and His124 together coordinate Zn(2+).

Belongs to the endoribonuclease YbeY family. Zn(2+) serves as cofactor.

It is found in the cytoplasm. In terms of biological role, single strand-specific metallo-endoribonuclease involved in late-stage 70S ribosome quality control and in maturation of the 3' terminus of the 16S rRNA. The protein is Endoribonuclease YbeY of Yersinia pestis.